Consider the following 108-residue polypeptide: Large ribosomal subunit protein uL24 (108 aa).

This sequence belongs to the universal ribosomal protein uL24 family. In terms of assembly, part of the 50S ribosomal subunit.

Its function is as follows. One of two assembly initiator proteins, it binds directly to the 5'-end of the 23S rRNA, where it nucleates assembly of the 50S subunit. One of the proteins that surrounds the polypeptide exit tunnel on the outside of the subunit. This chain is Large ribosomal subunit protein uL24, found in Geotalea daltonii (strain DSM 22248 / JCM 15807 / FRC-32) (Geobacter daltonii).